Reading from the N-terminus, the 509-residue chain is MNNTYYITTPIYYVNDVPHIGHAYTSVASDVIARFMRLSGHEVMFLTGTDEHGQKVEKAAIDKNIDPQKFTDQTSQSFRHLMTAMHISNDDFIRTTEERHKKAVAIFWQKLLDNGSIYEGFYEGWYAVRDEAFYDESELTADKLAPTGAAVEWVKEPSYFFNLSKWQDKLLEFYEANPDFIRPISRRNEVISFVKSGLKDLSVSRTTFNWGIKVPNDNKHVIYVWLDALANYISALGYPDQNSNYGKFWPANLQVVGKDILRFHAVYWPAFLMAAEIPLPKTIMAHGWWTNEGQKISKSLGNTIDPIKLIEEFGVDQVRYFLMREITFGADGNFARSNLITRINSELSNKIGNLLQRTTSFVYKNNDGKVPAITQDAINKIYELPLLKTAINSAKQNILLMEKTEINKILDNIINLAEEANIYIDSEAPWNLKKTDPEKMLEVLYALLETLRYIAVMLQAFMPSSAGKMLDQLGVNTEERLFKHLSLEFALTSASDILEPVIVFPRFEE.

Positions 12–22 (YYVNDVPHIGH) match the 'HIGH' region motif. The 'KMSKS' region signature appears at 295 to 299 (KISKS). Lys298 contributes to the ATP binding site.

This sequence belongs to the class-I aminoacyl-tRNA synthetase family. MetG type 2B subfamily. In terms of assembly, monomer.

Its subcellular location is the cytoplasm. The enzyme catalyses tRNA(Met) + L-methionine + ATP = L-methionyl-tRNA(Met) + AMP + diphosphate. Functionally, is required not only for elongation of protein synthesis but also for the initiation of all mRNA translation through initiator tRNA(fMet) aminoacylation. This Rickettsia bellii (strain RML369-C) protein is Methionine--tRNA ligase.